Consider the following 424-residue polypeptide: S-inosyl-L-homocysteine hydrolase (424 aa).

Positions 130 and 155 each coordinate substrate. 156-158 (TTT) lines the NAD(+) pocket. 2 residues coordinate substrate: Lys185 and Asp189. Residues Asn190, 219 to 224 (GYGWCG), Glu242, Asn277, 298 to 300 (AGH), and Asn346 each bind NAD(+).

It belongs to the adenosylhomocysteinase family. NAD(+) is required as a cofactor.

It is found in the cytoplasm. The enzyme catalyses S-inosyl-L-homocysteine + H2O = L-homocysteine + inosine. Its pathway is amino-acid biosynthesis; S-adenosyl-L-methionine biosynthesis. Its function is as follows. Catalyzes the hydrolysis of S-inosyl-L-homocysteine (SIH) to L-homocysteine (Hcy) and inosine. Likely functions in a S-adenosyl-L-methionine (SAM) recycling pathway from S-adenosyl-L-homocysteine (SAH) produced from SAM-dependent methylation reactions. Can also catalyze the reverse reaction in vitro, i.e. the synthesis of SIH from Hcy and inosine. The protein is S-inosyl-L-homocysteine hydrolase of Methanopyrus kandleri (strain AV19 / DSM 6324 / JCM 9639 / NBRC 100938).